The sequence spans 179 residues: MTQKVGVLAIQGGYQKHADMFKSLGVEVKLVKFNNDFDSIDRLVIPGGESTTLLNLLNKHQIFDKLYNFCSSKPVFGTCAGSIILSKGEGYLNLLDLEVQRNAYGRQVDSFVADISFNDKNITGVFIRAPKFIVVGNQVDILSKYQNSPVLLRQANILVSSFHPELTQDPTIHEYFLAM.

Position 48-50 (48-50 (GES)) interacts with L-glutamine. Catalysis depends on C79, which acts as the Nucleophile. L-glutamine-binding positions include R101 and 127 to 128 (IR). Active-site charge relay system residues include H163 and E165.

The protein belongs to the glutaminase PdxT/SNO family. In the presence of PdxS, forms a dodecamer of heterodimers. Only shows activity in the heterodimer.

It catalyses the reaction aldehydo-D-ribose 5-phosphate + D-glyceraldehyde 3-phosphate + L-glutamine = pyridoxal 5'-phosphate + L-glutamate + phosphate + 3 H2O + H(+). It carries out the reaction L-glutamine + H2O = L-glutamate + NH4(+). Its pathway is cofactor biosynthesis; pyridoxal 5'-phosphate biosynthesis. Functionally, catalyzes the hydrolysis of glutamine to glutamate and ammonia as part of the biosynthesis of pyridoxal 5'-phosphate. The resulting ammonia molecule is channeled to the active site of PdxS. The polypeptide is Pyridoxal 5'-phosphate synthase subunit PdxT (Francisella tularensis subsp. tularensis (strain FSC 198)).